The chain runs to 298 residues: Spermidine synthase (298 aa).

The region spanning 13–248 is the PABS domain; that stretch reads DGWFREINNM…GSIGFVVASK (236 aa). Position 44 (Gln44) interacts with S-adenosyl 3-(methylsulfanyl)propylamine. Position 74 (Tyr74) interacts with putrescine. Residues Gln75, Asp99, Asp119, 150-151, and Asp168 each bind S-adenosyl 3-(methylsulfanyl)propylamine; that span reads DG. Asp168 functions as the Proton acceptor in the catalytic mechanism. Residues 168–171 and Tyr236 contribute to the putrescine site; that span reads DSSD.

The protein belongs to the spermidine/spermine synthase family.

It carries out the reaction S-adenosyl 3-(methylsulfanyl)propylamine + putrescine = S-methyl-5'-thioadenosine + spermidine + H(+). It functions in the pathway amine and polyamine biosynthesis; spermidine biosynthesis; spermidine from putrescine: step 1/1. This chain is Spermidine synthase, found in Schizosaccharomyces pombe (strain 972 / ATCC 24843) (Fission yeast).